Here is a 1084-residue protein sequence, read N- to C-terminus: Ribonucleoside-diphosphate reductase NrdEB subunit alpha (1084 aa).

Substrate-binding positions include Thr152, Ser168–Cys169, and Gly197. Cys169 and Cys793 form a disulfide bridge. Residue Asn379 is the Proton acceptor of the active site. Cys381 (cysteine radical intermediate) is an active-site residue. In terms of domain architecture, DOD-type homing endonuclease spans Ile503–Val654. The active-site Proton acceptor is Glu768. Pro964–Ile968 lines the substrate pocket.

The protein belongs to the ribonucleoside diphosphate reductase large chain family. Tetramer of two alpha and two beta subunits. In terms of processing, this protein undergoes protein self-splicing that involves post-translational excision of the intervening region (intein) followed by peptide ligation.

It catalyses the reaction a 2'-deoxyribonucleoside 5'-diphosphate + [thioredoxin]-disulfide + H2O = a ribonucleoside 5'-diphosphate + [thioredoxin]-dithiol. With respect to regulation, under complex allosteric control mediated by deoxynucleoside triphosphates and ATP binding. The type of nucleotide bound at the specificity site determines substrate preference. It seems probable that ATP makes the enzyme reduce CDP and UDP, dGTP favors ADP reduction and dTTP favors GDP reduction. In terms of biological role, provides the precursors necessary for DNA synthesis. Catalyzes the biosynthesis of deoxyribonucleotides from the corresponding ribonucleotides. The chain is Ribonucleoside-diphosphate reductase NrdEB subunit alpha (nrdEB) from Bacillus subtilis (strain 168).